The following is a 222-amino-acid chain: MASLLARRSFSALRARHLAFSGQGLQGSHLCGLQSRAISYGSNKDDEEAEQLAKEISKDWSTVFERSMNTLFLTEMVRGLSLTLKYFFDPKVTINYPFEKGPLSPRFRGEHALRRYPTGEERCIACKLCEAVCPAQAITIEAEEREDGSRRTTRYDIDMTKCIYCGFCQEACPVDAIVEGPNFEFATETHEELLYDKEKLLENGDRWETEIAENLRSESLYR.

2 consecutive 4Fe-4S ferredoxin-type domains span residues 114–143 (RRYPTGEERCIACKLCEAVCPAQAITIEAE) and 153–182 (TRYDIDMTKCIYCGFCQEACPVDAIVEGPN). 8 residues coordinate [4Fe-4S] cluster: cysteine 123, cysteine 126, cysteine 129, cysteine 133, cysteine 162, cysteine 165, cysteine 168, and cysteine 172.

This sequence belongs to the complex I 23 kDa subunit family. In terms of assembly, complex I is composed of at least 49 different subunits. This is a component of the iron-sulfur (IP) fragment of the enzyme. The cofactor is [4Fe-4S] cluster.

Its subcellular location is the mitochondrion. The catalysed reaction is a ubiquinone + NADH + 5 H(+)(in) = a ubiquinol + NAD(+) + 4 H(+)(out). In terms of biological role, core subunit of the mitochondrial membrane respiratory chain NADH dehydrogenase (Complex I) that is believed to belong to the minimal assembly required for catalysis. Complex I functions in the transfer of electrons from NADH to the respiratory chain. The immediate electron acceptor for the enzyme is believed to be ubiquinone. May donate electrons to ubiquinone. This Arabidopsis thaliana (Mouse-ear cress) protein is NADH dehydrogenase [ubiquinone] iron-sulfur protein 8-B, mitochondrial.